A 209-amino-acid polypeptide reads, in one-letter code: Ribosomal RNA large subunit methyltransferase E (209 aa).

S-adenosyl-L-methionine-binding residues include Gly-63, Trp-65, Asp-83, Asp-99, and Asp-124. Residue Lys-164 is the Proton acceptor of the active site.

This sequence belongs to the class I-like SAM-binding methyltransferase superfamily. RNA methyltransferase RlmE family.

Its subcellular location is the cytoplasm. It carries out the reaction uridine(2552) in 23S rRNA + S-adenosyl-L-methionine = 2'-O-methyluridine(2552) in 23S rRNA + S-adenosyl-L-homocysteine + H(+). Its function is as follows. Specifically methylates the uridine in position 2552 of 23S rRNA at the 2'-O position of the ribose in the fully assembled 50S ribosomal subunit. This Cronobacter sakazakii (strain ATCC BAA-894) (Enterobacter sakazakii) protein is Ribosomal RNA large subunit methyltransferase E.